A 157-amino-acid polypeptide reads, in one-letter code: Protein Smg homolog (157 aa).

This sequence belongs to the Smg family.

This is Protein Smg homolog from Shewanella frigidimarina (strain NCIMB 400).